Consider the following 286-residue polypeptide: MKNILSIQSHVVYGYAGNKSATFPMQLLGIDVWALNTVQFSNHTQYGKWTGMVIPKEQIGEIVQGIDNIGELHQCDAVLSGYIGSAEQVEEIIKAFHKIKERNPKAIYLCDPVMGHPDKGCVVADGVKEGLIKIAMAQADIITPNLVELRELSGLAVENFEQAIEAVKVILSKGPKKVLVKHLSRVGKNAAQFEMLLANNDGIWHISRPLHNFNKEPVGVGDLTAGLFLANLLNGKSDVEAFEHTANTVNDVMETTHNAGVYELQTIAAREWIVNPKSQYKAVKIG.

Substrate contacts are provided by residues Ser-9 and 44–45; that span reads TQ. ATP-binding residues include Asp-111, Glu-148, and Lys-181. Asp-222 provides a ligand contact to substrate.

The protein belongs to the pyridoxine kinase family. PdxY subfamily. In terms of assembly, homodimer. Mg(2+) serves as cofactor.

It carries out the reaction pyridoxal + ATP = pyridoxal 5'-phosphate + ADP + H(+). Its pathway is cofactor metabolism; pyridoxal 5'-phosphate salvage; pyridoxal 5'-phosphate from pyridoxal: step 1/1. In terms of biological role, pyridoxal kinase involved in the salvage pathway of pyridoxal 5'-phosphate (PLP). Catalyzes the phosphorylation of pyridoxal to PLP. The sequence is that of Pyridoxal kinase PdxY from Histophilus somni (strain 129Pt) (Haemophilus somnus).